The following is a 1759-amino-acid chain: MDLGTAEGTRCTDPPAGKPAMAPKRKGGLKLNAICAKLSRQVVVEKRADAGSHTEGSPSQPRDQERSGPESGAARAPRSEEDKRRAVIEKWVNGEYSEEPAPTPVLGRIAREGLELPPEGVYMVQPQGCSDEEDHAEEPSKDGGALEEKDSDGAASKEDSGPSTRQASGEASSLRDYAASTMTEFLGMFGYDDQNTRDELARKISFEKLHAGSTPEAATSSMLPTSEDTLSKRARFSKYEEYIRKLKAGEQLSWPAPSTKTEERVGKEVVGTLPGLRLPSSTAHLETKATILPLPSHSSVQMQNLVARASKYDFFIQKLKTGENLRPQNGSTYKKPSKYDLENVKYLHLFKPGEGSPDMGGAIAFKTGKVGRPSKYDVRGIQKPGPAKVPPTPSLAPAPLASVPSAPSAPGPGPEPPASLSFNTPEYLKSTFSKTDSITTGTVSTVKNGLPTDKPAVTEDVNIYQKYIARFSGSQHCGHIHCAYQYREHYHCLDPECNYQRFTSKQDVIRHYNMHKKRDNSLQHGFMRFSPLDDCSVYYHGCHLNGKSTHYHCMQVGCNKVYTSTSDVMTHENFHKKNTQLINDGFQRFRATEDCGTADCQFYGQKTTHFHCRRPGCTFTFKNKCDIEKHKSYHIKDDAYAKDGFKKFYKYEECKYEGCVYSKATNHFHCIRAGCGFTFTSTSQMTSHKRKHERRHIRSSGALGLPPSLLGAKDTEHEESSNDDLVDFSALSSKNSSLSASPTSQQSSASLAAATAATEAGPSATKPPNSKISGLLPQGLPGSIPLALALSNSGLPTPTPYFPILAGRGSTSLPVGTPSLLGAVSSGSAASATPDTPTLVASGAGDSAPVAAASVPAPPASIMERISASKGLISPMMARLAAAALKPSATFDPGSGQQVTPARFPPAQVKPEPGESTGAPGPHEASQDRSLDLTVKEPSNESNGHAVPANSSLLSSLMNKMSQGNPGLGSLLNIKAEAEGSPAAEPSPFLGKAVKALVQEKLAEPWKVYLRRFGTKDFCDGQCDFLHKAHFHCVVEECGALFSTLDGAIKHANFHFRTEGGAAKGNTEAAFPASAAETKPPMAPSSPPVPPVTTATVSSLEGPAPSPASVPSTPTLLAWKQLASTIPQMPQIPASVPHLPASPLATTSLENAKPQVKPGFLQFQENDPCLATDCKYANKFHFHCLFGNCKYVCKTSGKAESHCLDHINPNNNLVNVRDQFAYYSLQCLCPNQHCEFRMRGHYHCLRTGCYFVTNITTKLPWHIKKHEKAERRAANGFKYFTKREECGRLGCKYNQVNSHFHCIREGCQFSFLLKHQMTSHARKHMRRMLGKNFDRVPPSQGPPGLMDAETDECMDYTGCSPGAMSSESSTMDRSCSSTPVGNESTAAGNTISMPTASGAKKRFWIIEDMSPFGKRRKTASSRKMLDEGMMLEGFRRFDLYEDCKDAACQFSLKVTHYHCTRENCGYKFCGRTHMYKHAQHHDRVDNLVLDDFKRFKASLSCHFADCPFSGTSTHFHCLRCRFRCTDSTKVTAHRKHHGKQDVISAAGFCQFSSSADCAVPDCKYKLKCSHFHCTFPGCRHTVVGMSQMDSHKRKHEKQERGEPAAEGPAPGPPISLDGSLSLGAEPGSLLFLQSAAAGLGLALGDAGDPGPPDAAAPGPREGAAAAAAAAGESSQEDEEEELELPEEEAEDDEDEDDDEDDDDEDDDEDDDDEDLRTDSEESLPEAAAEAAGAGARTPALAALAALGAPGPAPTAASSP.

Disordered stretches follow at residues 1–26 (MDLG…PKRK) and 46–175 (KRAD…SSLR). Composition is skewed to basic and acidic residues over residues 77-88 (PRSEEDKRRAVI) and 137-160 (EEPS…KEDS). The segment covering 161–171 (GPSTRQASGEA) has biased composition (polar residues). A Glycyl lysine isopeptide (Lys-Gly) (interchain with G-Cter in SUMO2) cross-link involves residue Lys288. Residues 374-420 (SKYDVRGIQKPGPAKVPPTPSLAPAPLASVPSAPSAPGPGPEPPASL) form a disordered region. The segment covering 387–396 (AKVPPTPSLA) has biased composition (pro residues). Over residues 397 to 406 (PAPLASVPSA) the composition is skewed to low complexity. Positions 407 to 417 (PSAPGPGPEPP) are enriched in pro residues. C2H2-type zinc fingers lie at residues 551-575 (YHCM…ENFH), 610-634 (FHCR…KSYH), and 668-692 (FHCI…KRKH). Disordered regions lie at residues 686–723 (TSHK…SSND), 736–776 (SSLS…SGLL), 824–843 (VSSG…VASG), and 889–949 (ATFD…AVPA). The segment covering 687 to 698 (SHKRKHERRHIR) has biased composition (basic residues). Residues 699-712 (SSGALGLPPSLLGA) show a composition bias toward low complexity. Ser720 and Ser721 each carry phosphoserine. The segment covering 736–764 (SSLSASPTSQQSSASLAAATAATEAGPSA) has biased composition (low complexity). Over residues 925–939 (ASQDRSLDLTVKEPS) the composition is skewed to basic and acidic residues. A Glycyl lysine isopeptide (Lys-Gly) (interchain with G-Cter in SUMO2) cross-link involves residue Lys975. A Phosphoserine modification is found at Ser981. Residues 1031–1055 (FHCVVEECGALFSTLDGAIKHANFH) form a C2H2-type 4 zinc finger. The interval 1067–1111 (TEAAFPASAAETKPPMAPSSPPVPPVTTATVSSLEGPAPSPASVP) is disordered. Over residues 1081 to 1091 (PMAPSSPPVPP) the composition is skewed to pro residues. The C2H2-type 5 zinc finger occupies 1300–1324 (FHCIREGCQFSFLLKHQMTSHARKH). A disordered region spans residues 1367–1392 (ESSTMDRSCSSTPVGNESTAAGNTIS). C2H2-type zinc fingers lie at residues 1457-1481 (YHCT…AQHH), 1515-1537 (FHCL…RKHH), and 1571-1595 (FHCT…KRKH). Disordered stretches follow at residues 1589 to 1620 (DSHK…DGSL) and 1643 to 1736 (LGDA…AGAR). Low complexity predominate over residues 1655–1673 (AAPGPREGAAAAAAAAGES). A compositionally biased stretch (acidic residues) spans 1674 to 1723 (SQEDEEEELELPEEEAEDDEDEDDDEDDDDEDDDEDDDDEDLRTDSEESL). Positions 1724 to 1736 (PEAAAEAAGAGAR) are enriched in low complexity.

Expressed in heart, lung, skeletal muscle, pancreas, testis, small intestine, and stomach, but it is not detectable in the adult brain.

It is found in the nucleus. Its function is as follows. Transcriptional activator. Involved in vascular assembly and morphogenesis through direct transcriptional regulation of EGFL7. In Homo sapiens (Human), this protein is Zinc finger protein castor homolog 1 (CASZ1).